We begin with the raw amino-acid sequence, 254 residues long: 7-cyano-7-deazaguanine synthase (254 aa).

ATP is bound at residue 30–40 (YSGGQDSATCL). 4 residues coordinate Zn(2+): cysteine 218, cysteine 233, cysteine 236, and cysteine 239.

The protein belongs to the QueC family. Zn(2+) serves as cofactor.

The catalysed reaction is 7-carboxy-7-deazaguanine + NH4(+) + ATP = 7-cyano-7-deazaguanine + ADP + phosphate + H2O + H(+). Its pathway is purine metabolism; 7-cyano-7-deazaguanine biosynthesis. Its function is as follows. Catalyzes the ATP-dependent conversion of 7-carboxy-7-deazaguanine (CDG) to 7-cyano-7-deazaguanine (preQ(0)). The chain is 7-cyano-7-deazaguanine synthase from Zymomonas mobilis subsp. mobilis (strain ATCC 31821 / ZM4 / CP4).